The chain runs to 156 residues: uncharacterized protein (156 aa).

Positions 11 to 156 (EEFRSYLTYT…ETDVVMSKKL (146 aa)) constitute an N-acetyltransferase domain.

Belongs to the acetyltransferase family. Homodimer.

This is an uncharacterized protein from Bacillus subtilis (strain 168).